We begin with the raw amino-acid sequence, 428 residues long: Enolase (428 aa).

Gln-165 contributes to the (2R)-2-phosphoglycerate binding site. Glu-207 serves as the catalytic Proton donor. Mg(2+)-binding residues include Asp-244, Glu-285, and Asp-312. (2R)-2-phosphoglycerate-binding residues include Lys-337, Arg-366, Ser-367, and Lys-388. The active-site Proton acceptor is the Lys-337.

It belongs to the enolase family. In terms of assembly, component of the RNA degradosome, a multiprotein complex involved in RNA processing and mRNA degradation. It depends on Mg(2+) as a cofactor.

It is found in the cytoplasm. Its subcellular location is the secreted. The protein resides in the cell surface. The catalysed reaction is (2R)-2-phosphoglycerate = phosphoenolpyruvate + H2O. The protein operates within carbohydrate degradation; glycolysis; pyruvate from D-glyceraldehyde 3-phosphate: step 4/5. In terms of biological role, catalyzes the reversible conversion of 2-phosphoglycerate (2-PG) into phosphoenolpyruvate (PEP). It is essential for the degradation of carbohydrates via glycolysis. The sequence is that of Enolase from Coxiella burnetii (strain Dugway 5J108-111).